The chain runs to 677 residues: Methionine--tRNA ligase (677 aa).

Residues 15–25 (PYANGSIHLGH) carry the 'HIGH' region motif. 4 residues coordinate Zn(2+): Cys-146, Cys-149, Cys-159, and Cys-162. Positions 333–337 (KMSKS) match the 'KMSKS' region motif. Residue Lys-336 coordinates ATP. Positions 575 to 677 (DFAKIDLRVA…DGAKPGQQVK (103 aa)) constitute a tRNA-binding domain.

It belongs to the class-I aminoacyl-tRNA synthetase family. MetG type 1 subfamily. Homodimer. Zn(2+) is required as a cofactor.

It localises to the cytoplasm. The catalysed reaction is tRNA(Met) + L-methionine + ATP = L-methionyl-tRNA(Met) + AMP + diphosphate. In terms of biological role, is required not only for elongation of protein synthesis but also for the initiation of all mRNA translation through initiator tRNA(fMet) aminoacylation. In Salmonella paratyphi A (strain AKU_12601), this protein is Methionine--tRNA ligase.